The following is a 260-amino-acid chain: Small ribosomal subunit protein uS2 (260 aa).

The protein belongs to the universal ribosomal protein uS2 family.

This is Small ribosomal subunit protein uS2 from Gluconacetobacter diazotrophicus (strain ATCC 49037 / DSM 5601 / CCUG 37298 / CIP 103539 / LMG 7603 / PAl5).